Consider the following 213-residue polypeptide: NDR1/HIN1-like protein 26 (213 aa).

Topologically, residues 1-27 (MSQISITSPKHCAKKGGININNRHKKL) are cytoplasmic. The chain crosses the membrane as a helical span at residues 28 to 48 (FFTFSTFFSGLLLIIFLVWLI). The Lumenal portion of the chain corresponds to 49 to 213 (LHPERPEFSL…LQGTRCSTTI (165 aa)). Residues Asn-67, Asn-77, and Asn-195 are each glycosylated (N-linked (GlcNAc...) asparagine).

In terms of tissue distribution, expressed in the vasculature of roots, rosette leaves, stems, cauline leaves and flowers. Specifically expressed in phloem.

The protein localises to the cell junction. Its subcellular location is the plasmodesma. The protein resides in the endoplasmic reticulum membrane. Involved in the regulation of sugar, amino acid and some primary metabolite export from companion cells (CCs) to sieve elements (SEs) in phloem. Required for apoplastic phloem sugar loading in source leaves in order to transport it to sink tissues. Required for correct sugar partitioning between source leaves and sink organs. This chain is NDR1/HIN1-like protein 26, found in Arabidopsis thaliana (Mouse-ear cress).